Here is a 785-residue protein sequence, read N- to C-terminus: LPS-assembly protein LptD (785 aa).

The N-terminal stretch at 1–58 is a signal peptide; sequence MSCSCLCMSLYRGADRIGRFYTAHCPQDMALCMHRQKLNPLALALAAAFALNAPAALA.

Belongs to the LptD family. Component of the lipopolysaccharide transport and assembly complex. Interacts with LptE and LptA.

It is found in the cell outer membrane. In terms of biological role, together with LptE, is involved in the assembly of lipopolysaccharide (LPS) at the surface of the outer membrane. This Chromobacterium violaceum (strain ATCC 12472 / DSM 30191 / JCM 1249 / CCUG 213 / NBRC 12614 / NCIMB 9131 / NCTC 9757 / MK) protein is LPS-assembly protein LptD.